We begin with the raw amino-acid sequence, 229 residues long: Putative N-acetylmannosamine-6-phosphate 2-epimerase (229 aa).

It belongs to the NanE family.

The catalysed reaction is an N-acyl-D-glucosamine 6-phosphate = an N-acyl-D-mannosamine 6-phosphate. It participates in amino-sugar metabolism; N-acetylneuraminate degradation; D-fructose 6-phosphate from N-acetylneuraminate: step 3/5. Its function is as follows. Converts N-acetylmannosamine-6-phosphate (ManNAc-6-P) to N-acetylglucosamine-6-phosphate (GlcNAc-6-P). The protein is Putative N-acetylmannosamine-6-phosphate 2-epimerase of Cutibacterium acnes (strain DSM 16379 / KPA171202) (Propionibacterium acnes).